The primary structure comprises 188 residues: Peptidyl-tRNA hydrolase (188 aa).

Residue Tyr-18 coordinates tRNA. His-23 (proton acceptor) is an active-site residue. TRNA contacts are provided by Tyr-67, Asn-69, and Asn-115.

It belongs to the PTH family. Monomer.

It localises to the cytoplasm. It carries out the reaction an N-acyl-L-alpha-aminoacyl-tRNA + H2O = an N-acyl-L-amino acid + a tRNA + H(+). Functionally, hydrolyzes ribosome-free peptidyl-tRNAs (with 1 or more amino acids incorporated), which drop off the ribosome during protein synthesis, or as a result of ribosome stalling. Catalyzes the release of premature peptidyl moieties from peptidyl-tRNA molecules trapped in stalled 50S ribosomal subunits, and thus maintains levels of free tRNAs and 50S ribosomes. In Salinibacter ruber (strain DSM 13855 / M31), this protein is Peptidyl-tRNA hydrolase.